Reading from the N-terminus, the 41-residue chain is Replication-associated protein (41 aa).

In terms of biological role, involved in viral RNA replication. The chain is Replication-associated protein from Potato leafroll virus (strain Potato/Scotland/strain 1/1984) (PLrV).